A 520-amino-acid chain; its full sequence is Nonsense-mediated mRNA decay factor SMG9 (520 aa).

The tract at residues 1-143 (MSESGHSQPG…KGEKEGQRPT (143 aa)) is disordered. Serine 2 carries the N-acetylserine modification. Phosphoserine is present on residues serine 2, serine 4, serine 7, serine 32, and serine 53. Over residues 36 to 53 (GRERDYIAPWERERRDGS) the composition is skewed to basic and acidic residues. Composition is skewed to pro residues over residues 78-94 (QPPP…PAPL) and 122-133 (TAPPPPTAPAPP). Serine 451 bears the Phosphoserine mark.

The protein belongs to the SMG9 family. In terms of assembly, self-associates to form homodimers and forms heterodimers with SMG8; these assembly forms may represent SMG1C intermediate forms. Component of the SMG1C complex composed of SMG1, SMG8 and SMG9. Interacts with DHX34; the interaction is RNA-independent. Post-translationally, phosphorylated by SMG1.

Its function is as follows. Involved in nonsense-mediated decay (NMD) of mRNAs containing premature stop codons. Is recruited by release factors to stalled ribosomes together with SMG1 and SMG8 (forming the SMG1C protein kinase complex) and, in the SMG1C complex, is required for the efficient association between SMG1 and SMG8. Plays a role in brain, heart, and eye development. The polypeptide is Nonsense-mediated mRNA decay factor SMG9 (Mus musculus (Mouse)).